The primary structure comprises 4538 residues: Polyketide synthase PksL (4538 aa).

The interval 1-123 (MRWRSNVKKI…ADMHADSPAI (123 aa)) is N-terminal hotdog fold 1. Residues 1–285 (MRWRSNVKKI…SKLVREAELI (285 aa)) form the PKS/mFAS DH 1 domain. The Proton acceptor; for dehydratase activity 1 role is filled by histidine 26. The interval 138-285 (QNVVQLDDVY…SKLVREAELI (148 aa)) is C-terminal hotdog fold 1. Aspartate 199 serves as the catalytic Proton donor; for dehydratase activity 1. Residues 289-314 (HQDAQETQMTRADTAERDKPADMVSS) form a disordered region. The Carrier 1 domain occupies 320 to 394 (SEAEQFVSQL…ELSAFLAEEY (75 aa)). Serine 354 bears the O-(pantetheine 4'-phosphoryl)serine mark. In terms of domain architecture, Ketosynthase family 3 (KS3) 1 spans 433-871 (AGDIAIIGLA…GSNAHIILEE (439 aa)). Residues cysteine 609, histidine 744, and histidine 784 each act as for beta-ketoacyl synthase 1 activity in the active site. A dehydratase region spans residues 1048–1226 (HILHPLLHQN…DSLYAGENGV (179 aa)). An N-terminal hotdog fold 2 region spans residues 1051 to 1175 (HPLLHQNVSD…GSAVLCEAGE (125 aa)). The PKS/mFAS DH 2 domain occupies 1051-1340 (HPLLHQNVSD…ARVLETDQEG (290 aa)). Histidine 1080 serves as the catalytic Proton acceptor; for dehydratase activity 2. The C-terminal hotdog fold 2 stretch occupies residues 1189–1340 (NGRTLSPFDC…ARVLETDQEG (152 aa)). Aspartate 1251 (proton donor; for dehydratase activity 2) is an active-site residue. Positions 1520 to 1713 (KGVYLITGGA…WKDGGMQIDA (194 aa)) are beta-ketoacyl reductase 1. A Carrier 2 domain is found at 1800–1873 (EKAENYFKQV…SLTRYFIDSR (74 aa)). Serine 1834 bears the O-(pantetheine 4'-phosphoryl)serine mark. One can recognise a Ketosynthase family 3 (KS3) 2 domain in the interval 1926–2365 (TEEIAIIGIS…GVNAHILIEE (440 aa)). Catalysis depends on for beta-ketoacyl synthase 2 activity residues cysteine 2103, histidine 2238, and histidine 2278. Residues 2546–2568 (TEEPFAPVQPVIPKPSVDREASG) are disordered. 2 consecutive Carrier domains span residues 2597-2674 (ITAE…AHEL) and 2738-2815 (VAIE…KSEL). An O-(pantetheine 4'-phosphoryl)serine mark is found at serine 2634 and serine 2775. The segment at 2828–2854 (SFEAAQQKPAASSHPKPAERPLQPVQH) is disordered. Positions 2873–3294 (EDAIAIVGMS…GTNAHIVIEE (422 aa)) constitute a Ketosynthase family 3 (KS3) 3 domain. Catalysis depends on for beta-ketoacyl synthase 3 activity residues cysteine 3040, histidine 3175, and histidine 3215. The interval 3686 to 3887 (DKVLLITGGT…PNWKETGLGE (202 aa)) is beta-ketoacyl reductase 2. One can recognise a Carrier 5 domain in the interval 3960-4037 (NLFPETVDWL…SFAHWLISKY (78 aa)). Residue serine 3997 is modified to O-(pantetheine 4'-phosphoryl)serine. The Ketosynthase family 3 (KS3) 4 domain occupies 4082–4485 (AEDIAIIGLS…GTNAHLIIEG (404 aa)). Catalysis depends on cysteine 4237, which acts as the For beta-ketoacyl synthase 4 activity.

It depends on pantetheine 4'-phosphate as a cofactor.

Its subcellular location is the cytoplasm. Its pathway is antibiotic biosynthesis; bacillaene biosynthesis. Functionally, involved in some intermediate steps for the synthesis of the antibiotic polyketide bacillaene which is involved in secondary metabolism. This is Polyketide synthase PksL (pksL) from Bacillus subtilis (strain 168).